Consider the following 333-residue polypeptide: UDP-N-acetylenolpyruvoylglucosamine reductase (333 aa).

The FAD-binding PCMH-type domain maps to 12–176; that stretch reads LPAQCRALIE…TSVVFRLPKD (165 aa). Arg-153 is a catalytic residue. Ser-221 functions as the Proton donor in the catalytic mechanism. Glu-317 is an active-site residue.

The protein belongs to the MurB family. FAD serves as cofactor.

It localises to the cytoplasm. It carries out the reaction UDP-N-acetyl-alpha-D-muramate + NADP(+) = UDP-N-acetyl-3-O-(1-carboxyvinyl)-alpha-D-glucosamine + NADPH + H(+). Its pathway is cell wall biogenesis; peptidoglycan biosynthesis. Cell wall formation. The protein is UDP-N-acetylenolpyruvoylglucosamine reductase of Idiomarina loihiensis (strain ATCC BAA-735 / DSM 15497 / L2-TR).